A 305-amino-acid polypeptide reads, in one-letter code: Fructose-bisphosphate aldolase (305 aa).

Serine 49 contacts D-glyceraldehyde 3-phosphate. Catalysis depends on aspartate 80, which acts as the Proton donor. Zn(2+) is bound by residues histidine 81, aspartate 102, glutamate 132, and histidine 178. Residue glycine 179 coordinates dihydroxyacetone phosphate. Histidine 208 is a Zn(2+) binding site. Dihydroxyacetone phosphate is bound by residues 209-211 (GAS) and 251-254 (NTDT).

The protein belongs to the class II fructose-bisphosphate aldolase family. Homotetramer. It depends on Zn(2+) as a cofactor.

It catalyses the reaction beta-D-fructose 1,6-bisphosphate = D-glyceraldehyde 3-phosphate + dihydroxyacetone phosphate. The protein operates within carbohydrate degradation; glycolysis; D-glyceraldehyde 3-phosphate and glycerone phosphate from D-glucose: step 4/4. Catalyzes the aldol condensation of dihydroxyacetone phosphate (DHAP or glycerone-phosphate) with glyceraldehyde 3-phosphate (G3P) to form fructose 1,6-bisphosphate (FBP) in gluconeogenesis and the reverse reaction in glycolysis. The protein is Fructose-bisphosphate aldolase of Thermus caldophilus.